Consider the following 96-residue polypeptide: Protein FPV129 (96 aa).

Helical transmembrane passes span 36 to 56 and 71 to 91; these read IILD…FVII and LFLL…LYIV.

The protein belongs to the chordopoxvirinae L2 family.

The protein localises to the virion membrane. It localises to the host cytoplasm. Early protein involved in early virion morphogenesis. Participates in the formation and elongation of crescent-shaped membrane precursors of immature virions in cytoplasmic factories. This chain is Protein FPV129, found in Vertebrata (FPV).